Consider the following 255-residue polypeptide: SLA class II histocompatibility antigen, DQ haplotype D alpha chain (255 aa).

Residues Met1 to Gly23 form the signal peptide. Residues Glu24–Lys120 form an alpha-1 region. Over Glu24–Glu217 the chain is Extracellular. Asn104 and Asn144 each carry an N-linked (GlcNAc...) asparagine glycan. Residues Pro113–Glu205 form the Ig-like C1-type domain. The segment at Ser121–Trp204 is alpha-2. Cysteines 133 and 189 form a disulfide. Positions Glu205–Glu217 are connecting peptide. The chain crosses the membrane as a helical span at residues Thr218–Ile240. Residues Gln241–Leu255 lie on the Cytoplasmic side of the membrane.

It belongs to the MHC class II family.

The protein resides in the membrane. In Sus scrofa (Pig), this protein is SLA class II histocompatibility antigen, DQ haplotype D alpha chain.